Here is a 99-residue protein sequence, read N- to C-terminus: uncharacterized protein (99 aa).

This is an uncharacterized protein from Dictyostelium discoideum (Social amoeba).